The following is a 342-amino-acid chain: Trans-3-hydroxy-L-proline dehydratase (342 aa).

The Proton acceptor role is filled by Ser90. Substrate-binding positions include 91-92 (GS), Asp252, and 257-258 (GT).

The protein belongs to the proline racemase family.

The enzyme catalyses trans-3-hydroxy-L-proline = 1-pyrroline-2-carboxylate + H2O. The catalysed reaction is trans-4-hydroxy-L-proline = cis-4-hydroxy-D-proline. Catalyzes the dehydration of trans-3-hydroxy-L-proline (t3LHyp) to Delta(1)-pyrroline-2-carboxylate (Pyr2C). Can also catalyze the epimerization of trans-4-hydroxy-L-proline (t4LHyp) to cis-4-hydroxy-D-proline (c4DHyp), albeit with 30-fold lower efficiency. Is likely involved in both degradation pathways that convert t3LHyp to L-proline and t4LHyp to alpha-ketoglutarate, which would allow A.tumefaciens to grow on t3LHyp or t4LHyp as a sole carbon source. Displays no proline racemase activity. The polypeptide is Trans-3-hydroxy-L-proline dehydratase (Agrobacterium fabrum (strain C58 / ATCC 33970) (Agrobacterium tumefaciens (strain C58))).